The primary structure comprises 347 residues: UPF0284 protein M164_0030 (347 aa).

The protein belongs to the UPF0284 family.

The protein is UPF0284 protein M164_0030 of Saccharolobus islandicus (strain M.16.4 / Kamchatka #3) (Sulfolobus islandicus).